The chain runs to 571 residues: CDT1-like protein a, chloroplastic (571 aa).

The N-terminal 79 residues, 1 to 79, are a transit peptide targeting the chloroplast; that stretch reads MSTPGSSRSI…GSRRRSEDPV (79 aa). Disordered regions lie at residues 1 to 110 and 288 to 315; these read MSTP…EKEK and TTSSLAKPTSSQINIAPTPTKPTSTPAK. Over residues 22-38 the composition is skewed to polar residues; the sequence is SPSSKSQTGNPNPSSVA. Positions 81-96 are enriched in low complexity; the sequence is SSAKSRLFFDSSSSSP. The span at 288–302 shows a compositional bias: polar residues; it reads TTSSLAKPTSSQINI. The span at 303 to 315 shows a compositional bias: low complexity; sequence APTPTKPTSTPAK.

Belongs to the Cdt1 family. In terms of assembly, binds to ARC6. Phosphorylated by cyclin D- and cyclin A-containing CDKA-1, and thus targeted to proteasome-mediated proteolysis. In terms of tissue distribution, expressed in proliferating (e.g. shoot and root apical meristems, organ primordia) and endoreplicating cells (e.g. guard cells and stomatal lineage, developing trichomes).

Its subcellular location is the plastid. The protein resides in the chloroplast. Member of the pre-replication complex. Component of the plastid division machinery. Promotes polyloidization and regulates endoreduplication. Involved in the coordination of cell and plastid division. This chain is CDT1-like protein a, chloroplastic (CDT1A), found in Arabidopsis thaliana (Mouse-ear cress).